The following is a 343-amino-acid chain: Anthranilate phosphoribosyltransferase (343 aa).

5-phospho-alpha-D-ribose 1-diphosphate-binding positions include Gly-84, 87–88 (GD), Thr-92, 94–97 (NIST), 112–120 (KHGNRSASS), and Ser-124. Gly-84 contacts anthranilate. Ser-96 contacts Mg(2+). Residue Asn-115 participates in anthranilate binding. Arg-170 contacts anthranilate. Positions 229 and 230 each coordinate Mg(2+).

This sequence belongs to the anthranilate phosphoribosyltransferase family. As to quaternary structure, homodimer. Mg(2+) serves as cofactor.

The catalysed reaction is N-(5-phospho-beta-D-ribosyl)anthranilate + diphosphate = 5-phospho-alpha-D-ribose 1-diphosphate + anthranilate. Its pathway is amino-acid biosynthesis; L-tryptophan biosynthesis; L-tryptophan from chorismate: step 2/5. Functionally, catalyzes the transfer of the phosphoribosyl group of 5-phosphorylribose-1-pyrophosphate (PRPP) to anthranilate to yield N-(5'-phosphoribosyl)-anthranilate (PRA). The sequence is that of Anthranilate phosphoribosyltransferase from Bordetella bronchiseptica (strain ATCC BAA-588 / NCTC 13252 / RB50) (Alcaligenes bronchisepticus).